A 312-amino-acid polypeptide reads, in one-letter code: tRNA-dihydrouridine(16) synthase (312 aa).

FMN is bound by residues 7–9 and Gln-68; that span reads PME. The active-site Proton donor is Cys-98. FMN contacts are provided by residues Lys-139, 200–202, and 224–225; these read NGE and GR.

This sequence belongs to the Dus family. DusC subfamily. It depends on FMN as a cofactor.

The catalysed reaction is 5,6-dihydrouridine(16) in tRNA + NADP(+) = uridine(16) in tRNA + NADPH + H(+). The enzyme catalyses 5,6-dihydrouridine(16) in tRNA + NAD(+) = uridine(16) in tRNA + NADH + H(+). Catalyzes the synthesis of 5,6-dihydrouridine (D), a modified base found in the D-loop of most tRNAs, via the reduction of the C5-C6 double bond in target uridines. Specifically modifies U16 in tRNAs. The protein is tRNA-dihydrouridine(16) synthase of Salmonella typhimurium (strain LT2 / SGSC1412 / ATCC 700720).